Consider the following 311-residue polypeptide: Aspartate carbamoyltransferase catalytic subunit (311 aa).

Carbamoyl phosphate contacts are provided by Arg-55 and Thr-56. Lys-85 serves as a coordination point for L-aspartate. Carbamoyl phosphate-binding residues include Arg-106, His-135, and Gln-138. Residues Arg-168 and Arg-230 each coordinate L-aspartate. Positions 268 and 269 each coordinate carbamoyl phosphate.

This sequence belongs to the aspartate/ornithine carbamoyltransferase superfamily. ATCase family. In terms of assembly, heterododecamer (2C3:3R2) of six catalytic PyrB chains organized as two trimers (C3), and six regulatory PyrI chains organized as three dimers (R2).

It carries out the reaction carbamoyl phosphate + L-aspartate = N-carbamoyl-L-aspartate + phosphate + H(+). The protein operates within pyrimidine metabolism; UMP biosynthesis via de novo pathway; (S)-dihydroorotate from bicarbonate: step 2/3. Catalyzes the condensation of carbamoyl phosphate and aspartate to form carbamoyl aspartate and inorganic phosphate, the committed step in the de novo pyrimidine nucleotide biosynthesis pathway. The chain is Aspartate carbamoyltransferase catalytic subunit from Yersinia pseudotuberculosis serotype O:1b (strain IP 31758).